The chain runs to 962 residues: MISTRVMDIKLREAAEGLGEDSTGKKKSKFKTFKKFFGKKKRKESPSSTGSSTWKQSQTRNEVIAIESGPVGYDSEDELEESRGTLGSRALSHDSIFIPESGQDATRPVRVFSQENVCDRIKALQLKIQCNVKMGPPPPPGGLPAKRGEDAGMSSEDDGLPRSPPEMSLLHDVGPGTTIKVSVVSPDHVSDSTVSARISDNSLAPVADFSYPAESSSCLDNSAAKHKLQVKPRNQRSSKMRRLSSRAQSESLSDLTCTPEEEENEEKPLLEVSPEERPSSGQQDVAPDRGPEPGPPAPLPPPGGARARRARLQHSSALTASVEEGGVPGEDPSSRPATPELAEPESAPTLRVEPPSPPEGPPNPGPDGGKQDGEAPPAGPCAPATDKAEEVVCAPEDVASPFPTAIPEGDTTPPETDPAATSEAPSARDGPERSVPKEAEPTPPVLPDEEKGPPGPAPEPEREAETEPERGAGTEPERIGTEPSTAPAPSPPAPKSCLKHRPAAASEGPAASPPLAAAESPPVEPGPGSLDAEAAAPERPKAERAEAPPAGAERAAPERKAERGGAELRGAKKFSVSSCRARPRPGVSRPLERASGRLPLARSGPVWRSEAALDDLQGLPEPQHAKPGPRKLAERGPQDSGDRAASPAGPRKSPQEAAAAPGTREPCPAAQEPAPSEDRNPFPVKLRSTSLSLKYRDGASQEVKGVKRYSAEVRLERSLTVLPKEEKCPLGTAPALRGTRAPSDQGKGKARPPEPLSSKPPLPRKPLLQSFTLPHQPAPPDAGPGEREPRKEPRTAEKRPLRRGAEKSLPPAATGPGADGQPAPPWITVTRQKRRGTLDQPPNQEDKPGARTLKSEPGKQAKVPERGQEPVKQADFVRSKSFLITPVKPAVDRKQGAKLNFKEGLQRGISLSHQNLAQSAVMMEKELHQLKRASYASTDQPSWMELARKKSQAWSDMPQIIK.

Disordered stretches follow at residues 38 to 102, 131 to 174, and 212 to 871; these read GKKK…PESG, NVKM…HDVG, and PAES…QEPV. Residues 46-61 show a composition bias toward polar residues; the sequence is PSSTGSSTWKQSQTRN. Ser92 carries the post-translational modification Phosphoserine. The span at 224 to 244 shows a compositional bias: basic residues; it reads AKHKLQVKPRNQRSSKMRRLS. A compositionally biased stretch (polar residues) spans 245 to 256; the sequence is SRAQSESLSDLT. Residues 266–278 are compositionally biased toward basic and acidic residues; the sequence is EKPLLEVSPEERP. Composition is skewed to pro residues over residues 292-303 and 354-365; these read EPGPPAPLPPPG and PPSPPEGPPNPG. Positions 407–425 are enriched in low complexity; sequence PEGDTTPPETDPAATSEAP. 2 stretches are compositionally biased toward basic and acidic residues: residues 429 to 440 and 459 to 480; these read DGPERSVPKEAE and EPEREAETEPERGAGTEPERIG. Ser490 bears the Phosphoserine mark. Low complexity predominate over residues 503-521; the sequence is AAASEGPAASPPLAAAESP. Composition is skewed to basic and acidic residues over residues 536 to 546, 555 to 570, 631 to 642, and 709 to 728; these read APERPKAERAE, AAPERKAERGGAELRG, KLAERGPQDSGD, and YSAEVRLERSLTVLPKEEKC. Positions 753 to 764 are enriched in pro residues; sequence PEPLSSKPPLPR. Composition is skewed to basic and acidic residues over residues 784–806 and 844–869; these read PGEREPRKEPRTAEKRPLRRGAE and QEDKPGARTLKSEPGKQAKVPERGQE.

This Homo sapiens (Human) protein is CRACD-like protein.